Here is a 193-residue protein sequence, read N- to C-terminus: PXMP2/4 family protein 2 (193 aa).

The next 4 membrane-spanning stretches (helical) occupy residues 56–78 (VATM…YRSL), 96–116 (IDQL…TNFI), 132–152 (LFYA…INFS), and 160–180 (VLYS…ISFD).

The protein belongs to the peroxisomal membrane protein PXMP2/4 family.

Its subcellular location is the membrane. This Dictyostelium discoideum (Social amoeba) protein is PXMP2/4 family protein 2.